A 442-amino-acid chain; its full sequence is Chromosomal replication initiator protein DnaA (442 aa).

Residues 1–75 form a domain I, interacts with DnaA modulators region; it reads MDAWPRCLER…GNGEVALAVG (75 aa). The domain II stretch occupies residues 75–104; the sequence is GSRPRAPEPLPAPQAVASAPAAAPIVPFAG. Positions 105 to 322 are domain III, AAA+ region; it reads NLDSHYTFAN…GALNTLVARA (218 aa). The ATP site is built by Gly-150, Gly-152, Lys-153, and Thr-154. The domain IV, binds dsDNA stretch occupies residues 323-442; the sequence is NFTGRSITVE…WEKLIRKLSE (120 aa).

This sequence belongs to the DnaA family. Oligomerizes as a right-handed, spiral filament on DNA at oriC.

The protein resides in the cytoplasm. In terms of biological role, plays an essential role in the initiation and regulation of chromosomal replication. ATP-DnaA binds to the origin of replication (oriC) to initiate formation of the DNA replication initiation complex once per cell cycle. Binds the DnaA box (a 9 base pair repeat at the origin) and separates the double-stranded (ds)DNA. Forms a right-handed helical filament on oriC DNA; dsDNA binds to the exterior of the filament while single-stranded (ss)DNA is stabiized in the filament's interior. The ATP-DnaA-oriC complex binds and stabilizes one strand of the AT-rich DNA unwinding element (DUE), permitting loading of DNA polymerase. After initiation quickly degrades to an ADP-DnaA complex that is not apt for DNA replication. Binds acidic phospholipids. This Xanthomonas campestris pv. campestris (strain B100) protein is Chromosomal replication initiator protein DnaA.